The sequence spans 802 residues: Elongation factor G, mitochondrial (802 aa).

The transit peptide at 1 to 24 (MRCPSLARLPNRALSGLTRSPVRL) directs the protein to the mitochondrion. The region spanning 100 to 387 (SRLRNIGIAA…GVIDYLPNPS (288 aa)) is the tr-type G domain. Residues 109-116 (AHIDSGKT), 185-189 (DTPGH), and 239-242 (NKMD) each bind GTP.

Belongs to the TRAFAC class translation factor GTPase superfamily. Classic translation factor GTPase family. EF-G/EF-2 subfamily.

The protein resides in the mitochondrion. It participates in protein biosynthesis; polypeptide chain elongation. Mitochondrial GTPase that catalyzes the GTP-dependent ribosomal translocation step during translation elongation. During this step, the ribosome changes from the pre-translocational (PRE) to the post-translocational (POST) state as the newly formed A-site-bound peptidyl-tRNA and P-site-bound deacylated tRNA move to the P and E sites, respectively. Catalyzes the coordinated movement of the two tRNA molecules, the mRNA and conformational changes in the ribosome. The polypeptide is Elongation factor G, mitochondrial (mef1) (Aspergillus fumigatus (strain CBS 144.89 / FGSC A1163 / CEA10) (Neosartorya fumigata)).